The following is a 282-amino-acid chain: NADPH-dependent 7-cyano-7-deazaguanine reductase (282 aa).

88-90 provides a ligand contact to substrate; the sequence is IES. 90 to 91 is an NADPH binding site; it reads SK. The active-site Thioimide intermediate is the Cys190. Asp197 acts as the Proton donor in catalysis. Residue 229 to 230 participates in substrate binding; the sequence is HE. An NADPH-binding site is contributed by 258 to 259; that stretch reads RG.

It belongs to the GTP cyclohydrolase I family. QueF type 2 subfamily. As to quaternary structure, homodimer.

Its subcellular location is the cytoplasm. It carries out the reaction 7-aminomethyl-7-carbaguanine + 2 NADP(+) = 7-cyano-7-deazaguanine + 2 NADPH + 3 H(+). The protein operates within tRNA modification; tRNA-queuosine biosynthesis. Its function is as follows. Catalyzes the NADPH-dependent reduction of 7-cyano-7-deazaguanine (preQ0) to 7-aminomethyl-7-deazaguanine (preQ1). This is NADPH-dependent 7-cyano-7-deazaguanine reductase from Salmonella schwarzengrund (strain CVM19633).